A 147-amino-acid chain; its full sequence is D-aminoacyl-tRNA deacylase (147 aa).

The Gly-cisPro motif, important for rejection of L-amino acids signature appears at 137–138; sequence GP.

The protein belongs to the DTD family. In terms of assembly, homodimer.

The protein localises to the cytoplasm. The enzyme catalyses glycyl-tRNA(Ala) + H2O = tRNA(Ala) + glycine + H(+). It catalyses the reaction a D-aminoacyl-tRNA + H2O = a tRNA + a D-alpha-amino acid + H(+). Its function is as follows. An aminoacyl-tRNA editing enzyme that deacylates mischarged D-aminoacyl-tRNAs. Also deacylates mischarged glycyl-tRNA(Ala), protecting cells against glycine mischarging by AlaRS. Acts via tRNA-based rather than protein-based catalysis; rejects L-amino acids rather than detecting D-amino acids in the active site. By recycling D-aminoacyl-tRNA to D-amino acids and free tRNA molecules, this enzyme counteracts the toxicity associated with the formation of D-aminoacyl-tRNA entities in vivo and helps enforce protein L-homochirality. The polypeptide is D-aminoacyl-tRNA deacylase (Acinetobacter baumannii (strain AYE)).